Consider the following 221-residue polypeptide: Tetraspanin-2 (221 aa).

Residues 1 to 13 lie on the Cytoplasmic side of the membrane; it reads MGRFRGGLRCIKY. A helical membrane pass occupies residues 14–34; the sequence is LLLGFNLLFWLAGSAVIAFGL. The Extracellular portion of the chain corresponds to 35 to 54; sequence WFRFGGAIKELSSEDKSPEY. The chain crosses the membrane as a helical span at residues 55-75; it reads FYVGLYVLVGAGALMMAVGFF. Over 76–90 the chain is Cytoplasmic; sequence GCCGAMRESQCVLGS. A helical membrane pass occupies residues 91–111; the sequence is FFTCLLVIFAAEVTTGVFAFI. The Extracellular segment spans residues 112–188; the sequence is GKGVAIRHVQ…ETIISVKLQL (77 aa). N139 carries an N-linked (GlcNAc...) asparagine glycan. The chain crosses the membrane as a helical span at residues 189–209; the sequence is IGIVGIGIAGLTIFGMIFSMV. The Cytoplasmic portion of the chain corresponds to 210–221; it reads LCCAIRNSRDVI.

Belongs to the tetraspanin (TM4SF) family.

It is found in the membrane. Its function is as follows. May play a role in signalling in oligodendrocytes in the early stages of their terminal differentiation into myelin-forming glia and may also function in stabilizing the mature sheath. The chain is Tetraspanin-2 (TSPAN2) from Homo sapiens (Human).